The chain runs to 316 residues: C1GALT1-specific chaperone 1 (316 aa).

Over 1-6 (MLSESS) the chain is Cytoplasmic. Residues 7 to 26 (SFLKGVMLGSIFCALITMLG) form a helical; Signal-anchor for type II membrane protein membrane-spanning segment. Topologically, residues 27 to 316 (HIRIGNRMHH…FLPPNGSEND (290 aa)) are lumenal.

This sequence belongs to the glycosyltransferase 31 family. Beta3-Gal-T subfamily. Associates with core 1 beta-3-galactosyltransferase (C1GALT1), probably not with the soluble active form.

The protein resides in the membrane. Functionally, probable chaperone required for the generation of 1 O-glycan Gal-beta1-3GalNAc-alpha1-Ser/Thr (T antigen), which is a precursor for many extended O-glycans in glycoproteins. Probably acts as a specific molecular chaperone assisting the folding/stability of core 1 beta-3-galactosyltransferase (C1GALT1). This Rattus norvegicus (Rat) protein is C1GALT1-specific chaperone 1 (C1galt1c1).